Consider the following 465-residue polypeptide: Chromosomal replication initiator protein DnaA (465 aa).

Positions 1 to 84 (MSLSLWQQCL…RFEVGSKPLV (84 aa)) are domain I, interacts with DnaA modulators. Residues 84 to 128 (VQTISQPAQSHHNPVSVARQQPVRMAPVRPSWDNSPVQAEHTYRS) are domain II. A domain III, AAA+ region region spans residues 129 to 345 (NVNPKHTFDN…GALNRVIANA (217 aa)). Gly173, Gly175, Lys176, and Thr177 together coordinate ATP. The segment at 346–465 (NFTGRSITID…FSNLIRTLSS (120 aa)) is domain IV, binds dsDNA.

This sequence belongs to the DnaA family. Oligomerizes as a right-handed, spiral filament on DNA at oriC.

It localises to the cytoplasm. Functionally, plays an essential role in the initiation and regulation of chromosomal replication. ATP-DnaA binds to the origin of replication (oriC) to initiate formation of the DNA replication initiation complex once per cell cycle. Binds the DnaA box (a 9 base pair repeat at the origin) and separates the double-stranded (ds)DNA. Forms a right-handed helical filament on oriC DNA; dsDNA binds to the exterior of the filament while single-stranded (ss)DNA is stabiized in the filament's interior. The ATP-DnaA-oriC complex binds and stabilizes one strand of the AT-rich DNA unwinding element (DUE), permitting loading of DNA polymerase. After initiation quickly degrades to an ADP-DnaA complex that is not apt for DNA replication. Binds acidic phospholipids. The polypeptide is Chromosomal replication initiator protein DnaA (Pectobacterium atrosepticum (strain SCRI 1043 / ATCC BAA-672) (Erwinia carotovora subsp. atroseptica)).